The following is a 640-amino-acid chain: MTYSLLPHIHSPQDLHALSLDKLPVLCDEIRNKIIESLSLTGGHLASNLGGVELTVALHYVFSSPDDQFIFDVGHQSYVHKLLTGRNTEAFSNIRHDNGLSGFTTPQESNHDIFFSGHAGNALSLALGLAKGSSNSSSHILPILGDAAFSCGLTLEALNNIPADLSKFIIVLNDNQMSISENVGNIPQGISHWMYPQKISKLSQKIHSWIQNLPSFLHKKKTLSHKVDIALKSLSHPLFEQFGLHYVGPIDGHNVKKLVQALQMIKDQPQPILFHVCTVKGNGLAEAERDPIRYHGVKAHFQNTSLKKTSGNVELQTPISFPQHAGNILCRLGKKYPQLQVVTPAMSLGSCLEDFRKQFPDRFTDVGIAEGHAVTFSAGIARSGTPVCCSIYSTFLHRAMDNVFHDVCMQELPVIFAIDRAGLAFHDGRSHHGIYDLGFLCSMPNMVICQPRNALVLERLFFSSLLWKSPCAIRYPNIPANEKASNSFFPFSPILPGEAEILCQGDDLLLIALGHMCNTALTVKEHLLDYGISTTVVDPIFIKPLDRKLLQSLLTHHSKVIILEEHSIHGGLGSEFLLFLNQHNIKADVLSLGVPDMFIPHGNPETILNLIGLTSDHITQRILSHFKFSTPIPIERFFKA.

Thiamine diphosphate is bound by residues H75 and 117–119 (GHA). D146 is a Mg(2+) binding site. Thiamine diphosphate is bound by residues 147–148 (AA), N175, and E370. N175 is a Mg(2+) binding site.

This sequence belongs to the transketolase family. DXPS subfamily. As to quaternary structure, homodimer. The cofactor is Mg(2+). It depends on thiamine diphosphate as a cofactor.

It carries out the reaction D-glyceraldehyde 3-phosphate + pyruvate + H(+) = 1-deoxy-D-xylulose 5-phosphate + CO2. The protein operates within metabolic intermediate biosynthesis; 1-deoxy-D-xylulose 5-phosphate biosynthesis; 1-deoxy-D-xylulose 5-phosphate from D-glyceraldehyde 3-phosphate and pyruvate: step 1/1. Catalyzes the acyloin condensation reaction between C atoms 2 and 3 of pyruvate and glyceraldehyde 3-phosphate to yield 1-deoxy-D-xylulose-5-phosphate (DXP). This chain is 1-deoxy-D-xylulose-5-phosphate synthase, found in Chlamydia trachomatis serovar D (strain ATCC VR-885 / DSM 19411 / UW-3/Cx).